Here is a 219-residue protein sequence, read N- to C-terminus: MFDADCLKLMFVAGSQDFYHIKGGKNDRINALLDTLELALQSKITAFQFRQKGDLALQDPTQIKQLAMKCQKLCQKYGAPFIVNDEVQLALELKADGVHVGQEDMAIEEVITLCKKRQFIGLSVNTLEQALKARHLDAVAYLGVGPIFPTPSKKDKQVVGVELLKKIKDSGIKKPLIAIGGITMHNAPKLREYGGIAVISAIAQAKDKALAVGKLLNNA.

Residues 48–52 (QFRQK) and N84 contribute to the 4-amino-2-methyl-5-(diphosphooxymethyl)pyrimidine site. Residues D85 and D104 each coordinate Mg(2+). Residue S123 participates in 4-amino-2-methyl-5-(diphosphooxymethyl)pyrimidine binding. 150 to 152 (TPS) is a binding site for 2-[(2R,5Z)-2-carboxy-4-methylthiazol-5(2H)-ylidene]ethyl phosphate. K153 is a binding site for 4-amino-2-methyl-5-(diphosphooxymethyl)pyrimidine. 2-[(2R,5Z)-2-carboxy-4-methylthiazol-5(2H)-ylidene]ethyl phosphate contacts are provided by residues G181 and 199–200 (IS).

This sequence belongs to the thiamine-phosphate synthase family. Mg(2+) serves as cofactor.

The catalysed reaction is 2-[(2R,5Z)-2-carboxy-4-methylthiazol-5(2H)-ylidene]ethyl phosphate + 4-amino-2-methyl-5-(diphosphooxymethyl)pyrimidine + 2 H(+) = thiamine phosphate + CO2 + diphosphate. The enzyme catalyses 2-(2-carboxy-4-methylthiazol-5-yl)ethyl phosphate + 4-amino-2-methyl-5-(diphosphooxymethyl)pyrimidine + 2 H(+) = thiamine phosphate + CO2 + diphosphate. It catalyses the reaction 4-methyl-5-(2-phosphooxyethyl)-thiazole + 4-amino-2-methyl-5-(diphosphooxymethyl)pyrimidine + H(+) = thiamine phosphate + diphosphate. It functions in the pathway cofactor biosynthesis; thiamine diphosphate biosynthesis; thiamine phosphate from 4-amino-2-methyl-5-diphosphomethylpyrimidine and 4-methyl-5-(2-phosphoethyl)-thiazole: step 1/1. In terms of biological role, condenses 4-methyl-5-(beta-hydroxyethyl)thiazole monophosphate (THZ-P) and 2-methyl-4-amino-5-hydroxymethyl pyrimidine pyrophosphate (HMP-PP) to form thiamine monophosphate (TMP). The sequence is that of Thiamine-phosphate synthase from Helicobacter pylori (strain ATCC 700392 / 26695) (Campylobacter pylori).